The primary structure comprises 250 residues: MFIFKRKKQVEMPLEKIPAHIGIIMDGNGRWAKKRLKPRVMGHKAGMDALQEVTIAASGLGVKVLTVYAFSTENWSRPDDEVKFIMNLPVEFFDKYVPELDKNNVRVQVIGDTHKLPKATYDAMQRACLRTKHNSGLVLNFALNYGGRSEITNAIKEIAQDVLEAKLNPDDITEDLVANHLMTNSLPYLYRDPDLIIRTSGELRLSNFLPWQSAYSEFYFTPVLWPDFKKDELHKAIVDYNQRHRRFGSV.

Aspartate 26 is a catalytic residue. Residue aspartate 26 participates in Mg(2+) binding. Substrate-binding positions include 27–30 (GNGR), tryptophan 31, arginine 39, histidine 43, and 71–73 (STE). Residue asparagine 74 is the Proton acceptor of the active site. Substrate-binding positions include tryptophan 75, arginine 77, arginine 198, and 204-206 (RLS). Glutamate 217 serves as a coordination point for Mg(2+).

Belongs to the UPP synthase family. In terms of assembly, homodimer. It depends on Mg(2+) as a cofactor.

Catalyzes the condensation of isopentenyl diphosphate (IPP) with allylic pyrophosphates generating different type of terpenoids. The sequence is that of Isoprenyl transferase from Streptococcus agalactiae serotype III (strain NEM316).